A 273-amino-acid chain; its full sequence is Diaminopimelate epimerase (273 aa).

Residues Asn-11 and Asn-60 each coordinate substrate. The Proton donor role is filled by Cys-69. Residues 70-71 (GN), Asn-181, and 199-200 (ER) each bind substrate. The Proton acceptor role is filled by Cys-209. Substrate is bound at residue 210–211 (GT).

Belongs to the diaminopimelate epimerase family. In terms of assembly, homodimer.

The protein localises to the cytoplasm. The enzyme catalyses (2S,6S)-2,6-diaminopimelate = meso-2,6-diaminopimelate. The protein operates within amino-acid biosynthesis; L-lysine biosynthesis via DAP pathway; DL-2,6-diaminopimelate from LL-2,6-diaminopimelate: step 1/1. Its function is as follows. Catalyzes the stereoinversion of LL-2,6-diaminopimelate (L,L-DAP) to meso-diaminopimelate (meso-DAP), a precursor of L-lysine and an essential component of the bacterial peptidoglycan. The sequence is that of Diaminopimelate epimerase from Helicobacter pylori (strain ATCC 700392 / 26695) (Campylobacter pylori).